Consider the following 145-residue polypeptide: D-aminoacyl-tRNA deacylase (145 aa).

The Gly-cisPro motif, important for rejection of L-amino acids signature appears at 137–138; it reads GP.

The protein belongs to the DTD family. Homodimer.

It localises to the cytoplasm. The enzyme catalyses glycyl-tRNA(Ala) + H2O = tRNA(Ala) + glycine + H(+). It carries out the reaction a D-aminoacyl-tRNA + H2O = a tRNA + a D-alpha-amino acid + H(+). An aminoacyl-tRNA editing enzyme that deacylates mischarged D-aminoacyl-tRNAs. Also deacylates mischarged glycyl-tRNA(Ala), protecting cells against glycine mischarging by AlaRS. Acts via tRNA-based rather than protein-based catalysis; rejects L-amino acids rather than detecting D-amino acids in the active site. By recycling D-aminoacyl-tRNA to D-amino acids and free tRNA molecules, this enzyme counteracts the toxicity associated with the formation of D-aminoacyl-tRNA entities in vivo and helps enforce protein L-homochirality. The chain is D-aminoacyl-tRNA deacylase from Pseudomonas putida (strain ATCC 47054 / DSM 6125 / CFBP 8728 / NCIMB 11950 / KT2440).